Consider the following 88-residue polypeptide: Putative septation protein SpoVG (88 aa).

The protein belongs to the SpoVG family.

In terms of biological role, could be involved in septation. The polypeptide is Putative septation protein SpoVG (Lachnospira eligens (strain ATCC 27750 / DSM 3376 / VPI C15-48 / C15-B4) (Eubacterium eligens)).